Here is a 79-residue protein sequence, read N- to C-terminus: Beta-defensin 15 (79 aa).

A signal peptide spans 1–20 (MKTFLFLFAVFFFLDPAKNA). 3 disulfide bridges follow: C26–C53, C33–C47, and C37–C54.

Belongs to the beta-defensin family.

The protein localises to the secreted. Has antibacterial activity. In Rattus norvegicus (Rat), this protein is Beta-defensin 15 (Defb15).